Reading from the N-terminus, the 162-residue chain is Phosphopantetheine adenylyltransferase (162 aa).

Ser-11 contacts substrate. ATP contacts are provided by residues 11–12 (SF) and His-19. Substrate is bound by residues Lys-43, Val-76, and Arg-90. ATP contacts are provided by residues 91 to 93 (GLR), Glu-101, and 126 to 132 (HLYISSS).

It belongs to the bacterial CoaD family. As to quaternary structure, homohexamer. It depends on Mg(2+) as a cofactor.

It localises to the cytoplasm. The catalysed reaction is (R)-4'-phosphopantetheine + ATP + H(+) = 3'-dephospho-CoA + diphosphate. It functions in the pathway cofactor biosynthesis; coenzyme A biosynthesis; CoA from (R)-pantothenate: step 4/5. Reversibly transfers an adenylyl group from ATP to 4'-phosphopantetheine, yielding dephospho-CoA (dPCoA) and pyrophosphate. In Streptococcus pneumoniae (strain ATCC 700669 / Spain 23F-1), this protein is Phosphopantetheine adenylyltransferase.